We begin with the raw amino-acid sequence, 308 residues long: Transaldolase (308 aa).

The active-site Schiff-base intermediate with substrate is Lys-125.

It belongs to the transaldolase family. Type 1 subfamily. In terms of assembly, homodimer.

Its subcellular location is the cytoplasm. The catalysed reaction is D-sedoheptulose 7-phosphate + D-glyceraldehyde 3-phosphate = D-erythrose 4-phosphate + beta-D-fructose 6-phosphate. It participates in carbohydrate degradation; pentose phosphate pathway; D-glyceraldehyde 3-phosphate and beta-D-fructose 6-phosphate from D-ribose 5-phosphate and D-xylulose 5-phosphate (non-oxidative stage): step 2/3. Transaldolase is important for the balance of metabolites in the pentose-phosphate pathway. The polypeptide is Transaldolase (Stutzerimonas stutzeri (strain A1501) (Pseudomonas stutzeri)).